The sequence spans 448 residues: Beta-alanine--pyruvate aminotransferase (448 aa).

Trp61 is a substrate binding site. 120–121 (GS) contacts pyridoxal 5'-phosphate. Residue Lys288 is modified to N6-(pyridoxal phosphate)lysine. Position 327 (Thr327) interacts with pyridoxal 5'-phosphate. Residues Arg414 and Gln421 each contribute to the substrate site.

It belongs to the class-III pyridoxal-phosphate-dependent aminotransferase family. Homotetramer. Pyridoxal 5'-phosphate serves as cofactor.

It carries out the reaction 3-oxopropanoate + L-alanine = beta-alanine + pyruvate. With respect to regulation, inhibited by gabaculine (5-amino-1,3-cyclohexadienylcarboxylic acid). Functionally, involved in the degradation of beta-alanine. Catalyzes the transfer of the amino group from beta-alanine to pyruvate to yield L-alanine and 3-oxopropanoate. It can also accept both 4-aminobutyrate and (S)-alpha-methylbenzylamine (MBA) as amino-group donors in the presence of pyruvate as an amine acceptor. This chain is Beta-alanine--pyruvate aminotransferase (bauA), found in Pseudomonas aeruginosa (strain ATCC 15692 / DSM 22644 / CIP 104116 / JCM 14847 / LMG 12228 / 1C / PRS 101 / PAO1).